The primary structure comprises 341 residues: Methionine import ATP-binding protein MetN (341 aa).

The ABC transporter domain occupies 2–241; it reads IELNQIVKRY…PQHDVTKRFV (240 aa). An ATP-binding site is contributed by 38–45; sequence GFSGAGKS.

Belongs to the ABC transporter superfamily. Methionine importer (TC 3.A.1.24) family. The complex is composed of two ATP-binding proteins (MetN), two transmembrane proteins (MetI) and a solute-binding protein (MetQ).

The protein resides in the cell membrane. It catalyses the reaction L-methionine(out) + ATP + H2O = L-methionine(in) + ADP + phosphate + H(+). The catalysed reaction is D-methionine(out) + ATP + H2O = D-methionine(in) + ADP + phosphate + H(+). Its function is as follows. Part of the ABC transporter complex MetNIQ involved in methionine import. Responsible for energy coupling to the transport system. The chain is Methionine import ATP-binding protein MetN from Staphylococcus saprophyticus subsp. saprophyticus (strain ATCC 15305 / DSM 20229 / NCIMB 8711 / NCTC 7292 / S-41).